The chain runs to 960 residues: Putative helicase L207/L206 (960 aa).

The tract at residues 1–32 (MTSKTENKKSVSSKTGRTTNNSTNKKTTEKSV) is disordered. Residues 12–25 (SSKTGRTTNNSTNK) are compositionally biased toward low complexity. The SF3 helicase domain occupies 646 to 807 (SMREYILTLL…FIKHSEATKK (162 aa)).

This chain is Putative helicase L207/L206, found in Acanthamoeba polyphaga mimivirus (APMV).